The primary structure comprises 358 residues: Trans-enoyl reductase milB (358 aa).

NADP(+)-binding positions include 48-51 (VDTK), 170-173 (ATAT), 193-196 (SAKH), tyrosine 211, 258-259 (LD), and 349-350 (VR).

It belongs to the zinc-containing alcohol dehydrogenase family. Monomer.

It carries out the reaction 10 malonyl-CoA + acetyl-CoA + 3 AH2 + 8 NADPH + 18 H(+) = cordypyrone A + 3 A + 10 CO2 + 8 NADP(+) + 11 CoA + 8 H2O. The protein operates within secondary metabolite biosynthesis. Its function is as follows. Trans-enoyl reductase; part of the gene cluster that mediates the biosynthesis of cordypyrones A and B, 2 pyrones that show modest activities against pathogenic bacteria including methicillin-resistant Staphylococcus aureus (MRSA), Mycobacterium tuberculosis and Bacillus cereus. The HR-PKS milA catalyzes the formation of cordypyrones A via condensation of one acetate with 10 malonate units. Since milA lacks an enoyl reductase domain, the 2 beta-keto processing domains DH and KR of milA collaborate with the trans-enoyl reductase milB to catalyze the different levels of reduction. The cytochrome P450 monooxygenase milC then hydroxylates the C-22 of cordypyrones A to yield cordypyrones B. This is Trans-enoyl reductase milB from Cordyceps militaris (strain CM01) (Caterpillar fungus).